The chain runs to 270 residues: uncharacterized protein (270 aa).

6 residues coordinate a divalent metal cation: Asp53, His55, Asp83, Asn116, His207, and His209.

It belongs to the metallophosphoesterase superfamily. Requires a divalent metal cation as cofactor.

This is an uncharacterized protein from Bacillus subtilis (strain 168).